The primary structure comprises 224 residues: MSNPDTIIIDTGCANLSSVRYAFERIGADVEVSDDIDKIKAATRVVLPGVGTARAAMKALKDKKLIDTICSLTQPVLGVCLGMQMLTKASQERGGLSYGNSSKDCQCLGLIDTNIEQLDAKGLPLPHMGWNQISPSEHPLFAGVAEGSYVYFVHSYRAPLGDFTIAKCEYGEGFSAAIAKDNFMGVQFHPEKSAAVGATILRNFMKMNAGSFAGNHKSTQESAQ.

A Glutamine amidotransferase type-1 domain is found at 5–214; the sequence is DTIIIDTGCA…MKMNAGSFAG (210 aa). C80 functions as the Nucleophile in the catalytic mechanism. Residues H189 and E191 contribute to the active site.

In terms of assembly, heterodimer of HisH and HisF.

It is found in the cytoplasm. The enzyme catalyses 5-[(5-phospho-1-deoxy-D-ribulos-1-ylimino)methylamino]-1-(5-phospho-beta-D-ribosyl)imidazole-4-carboxamide + L-glutamine = D-erythro-1-(imidazol-4-yl)glycerol 3-phosphate + 5-amino-1-(5-phospho-beta-D-ribosyl)imidazole-4-carboxamide + L-glutamate + H(+). It carries out the reaction L-glutamine + H2O = L-glutamate + NH4(+). It functions in the pathway amino-acid biosynthesis; L-histidine biosynthesis; L-histidine from 5-phospho-alpha-D-ribose 1-diphosphate: step 5/9. IGPS catalyzes the conversion of PRFAR and glutamine to IGP, AICAR and glutamate. The HisH subunit catalyzes the hydrolysis of glutamine to glutamate and ammonia as part of the synthesis of IGP and AICAR. The resulting ammonia molecule is channeled to the active site of HisF. This is Imidazole glycerol phosphate synthase subunit HisH from Shewanella loihica (strain ATCC BAA-1088 / PV-4).